The primary structure comprises 192 residues: UPF0301 protein Bcep1808_0798 (192 aa).

This sequence belongs to the UPF0301 (AlgH) family.

This is UPF0301 protein Bcep1808_0798 from Burkholderia vietnamiensis (strain G4 / LMG 22486) (Burkholderia cepacia (strain R1808)).